A 105-amino-acid chain; its full sequence is Small ribosomal subunit protein uS14m (105 aa).

Belongs to the universal ribosomal protein uS14 family. Component of the mitochondrial small ribosomal subunit (mt-SSU). Mature yeast 74S mitochondrial ribosomes consist of a small (37S) and a large (54S) subunit. The 37S small subunit contains a 15S ribosomal RNA (15S mt-rRNA) and at least 32 different proteins. The 54S large subunit contains a 21S rRNA (21S mt-rRNA) and at least 45 different proteins.

It is found in the mitochondrion. Component of the mitochondrial ribosome (mitoribosome), a dedicated translation machinery responsible for the synthesis of mitochondrial genome-encoded proteins, including at least some of the essential transmembrane subunits of the mitochondrial respiratory chain. The mitoribosomes are attached to the mitochondrial inner membrane and translation products are cotranslationally integrated into the membrane. The polypeptide is Small ribosomal subunit protein uS14m (mrp2) (Schizosaccharomyces pombe (strain 972 / ATCC 24843) (Fission yeast)).